Here is a 354-residue protein sequence, read N- to C-terminus: MSQSTYSLEQLADFLKVEFQGNGATLLSGVEEIEEAKTAHITFLDNEKYAKHLKSSEAGAIIISRTQFQKYRDLNKNFLITSESPSLVFQKCLELFITPVDSGFPGIHPTAVIHPTAIIEDHVCIEPYAVVCQHAHVGSACHIGSGSVIGAYSTVGEHSYIHPRVVIRERVSIGKRVIIQPGAVIGSCGFGYVTSAFGQHKHLKHLGKVIIEDDVEIGANTTIDRGRFKHSVVREGSKIDNLVQIAHQVEVGQHSMIVAQAGIAGSTKIGNHVIIGGQAGITGHICIADHVIMMAQTGVTKSITSPGIYGGAPARPYQEIHRQVAKVRNLPRLEERIAALEKLVQKLEALSEQH.

The Proton acceptor role is filled by H247.

Belongs to the transferase hexapeptide repeat family. LpxD subfamily. As to quaternary structure, homotrimer.

The catalysed reaction is a UDP-3-O-[(3R)-3-hydroxyacyl]-alpha-D-glucosamine + a (3R)-hydroxyacyl-[ACP] = a UDP-2-N,3-O-bis[(3R)-3-hydroxyacyl]-alpha-D-glucosamine + holo-[ACP] + H(+). It participates in bacterial outer membrane biogenesis; LPS lipid A biosynthesis. Catalyzes the N-acylation of UDP-3-O-acylglucosamine using 3-hydroxyacyl-ACP as the acyl donor. Is involved in the biosynthesis of lipid A, a phosphorylated glycolipid that anchors the lipopolysaccharide to the outer membrane of the cell. This is UDP-3-O-acylglucosamine N-acyltransferase from Chlamydia trachomatis serovar A (strain ATCC VR-571B / DSM 19440 / HAR-13).